The chain runs to 504 residues: Acetylcholine receptor subunit epsilon (504 aa).

An N-terminal signal peptide occupies residues 1–19 (MESGVRILSLLILLHNSLA). Topologically, residues 20–240 (SESEESRLIK…IVFNLIIQRK (221 aa)) are extracellular. N-linked (GlcNAc...) asparagine glycosylation is found at Asn-88 and Asn-161. Cys-148 and Cys-162 are disulfide-bonded. A helical membrane pass occupies residues 241–265 (PLFYIINIIVPCVLISFLVVLVYFL). Residues 266–273 (PAKAGGQK) are Cytoplasmic-facing. Residues 274 to 292 (CTVSISVLLAQTVFLFLIA) traverse the membrane as a helical segment. Residues 293–307 (QMVPETSLSVPLIGK) are Extracellular-facing. The chain crosses the membrane as a helical span at residues 308–329 (YLMFVMFVSTLIVLSCVIVLNV). The Cytoplasmic segment spans residues 330–473 (SLRSPSTHNL…WILIGKVLDV (144 aa)). Residues 474–497 (LCFWVALPLFVLGTLAIFLMGHFN) form a helical membrane-spanning segment. Over 498–504 (TAPEHPF) the chain is Extracellular.

This sequence belongs to the ligand-gated ion channel (TC 1.A.9) family. Acetylcholine receptor (TC 1.A.9.1) subfamily. Epsilon/CHRNE sub-subfamily. As to quaternary structure, pentamer of two alpha chains, and one each of the beta, delta, and gamma (in immature muscle) or epsilon (in mature muscle) chains.

It localises to the postsynaptic cell membrane. The protein resides in the cell membrane. It catalyses the reaction K(+)(in) = K(+)(out). It carries out the reaction Na(+)(in) = Na(+)(out). After binding acetylcholine, the AChR responds by an extensive change in conformation that affects all subunits and leads to opening of an ion-conducting channel across the plasma membrane. This is Acetylcholine receptor subunit epsilon (chrne) from Xenopus laevis (African clawed frog).